Here is a 161-residue protein sequence, read N- to C-terminus: Protein-export protein SecB (161 aa).

Belongs to the SecB family. Homotetramer, a dimer of dimers. One homotetramer interacts with 1 SecA dimer.

It localises to the cytoplasm. Its function is as follows. One of the proteins required for the normal export of preproteins out of the cell cytoplasm. It is a molecular chaperone that binds to a subset of precursor proteins, maintaining them in a translocation-competent state. It also specifically binds to its receptor SecA. The chain is Protein-export protein SecB from Methylocella silvestris (strain DSM 15510 / CIP 108128 / LMG 27833 / NCIMB 13906 / BL2).